The primary structure comprises 440 residues: KH domain-containing protein 3 (440 aa).

Residues 1 to 39 (MASLKRFQTLVPLDHKQGTLFEIIGEPKLPKWFHVECLE) form an involved in RNA binding region. Residues 40–118 (DPKRLYVEPR…CRMKLMEIEA (79 aa)) enclose the KH; atypical domain. Residues 132-201 (KAATQPAPVK…EVREAATEQA (70 aa)) form a disordered region. Position 151 is a phosphoserine; by ATR (Ser-151). A phosphothreonine mark is found at Thr-274 and Thr-286. Residues 341–440 (VREAATQLSP…RDAWESFIIL (100 aa)) are required for interaction with NUMA1 and regulation of apoptosis in response to DNA damage. The residue at position 349 (Ser-349) is a Phosphoserine.

The protein belongs to the KHDC1 family. As to quaternary structure, component of the subcortical maternal complex (SCMC), at least composed of NLRP5, KHDC3, OOEP, and TLE6. Within the complex, interacts with NLRP5, OOEP and TLE6. The SCMC may facilitate translocation of its components between the nuclear and cytoplasmic compartments. Forms a scaffold complex with OOEP/FLOPED, and interacts with BLM and TRIM25 at DNA replication forks. Interacts with PARP1; the interaction is increased following the formation of DNA double-strand breaks. Interacts (via C-terminus) with NUMA1. Phosphorylation at Ser-151 is required to promote stalled fork restart. As to expression, detected in ovary, but not in testis or somatic tissues. In the ovary, expressed in growing oocytes.

Its subcellular location is the cytoplasm. The protein localises to the cell cortex. It localises to the nucleus. The protein resides in the mitochondrion. It is found in the cytoskeleton. Its subcellular location is the microtubule organizing center. The protein localises to the centrosome. It localises to the chromosome. Component of the subcortical maternal complex (SCMC), a multiprotein complex that plays a key role in early embryonic development. The SCMC complex is a structural constituent of cytoplasmic lattices, which consist in fibrous structures found in the cytoplasm of oocytes and preimplantation embryos. They are required to store maternal proteins critical for embryonic development, such as proteins that control epigenetic reprogramming of the preimplantation embryo, and prevent their degradation or activation. KHDC3 ensures proper spindle assembly by regulating the localization of AURKA via RHOA signaling and of PLK1 via a RHOA-independent process. Required for the localization of MAD2L1 to kinetochores to enable spindle assembly checkpoint function. As part of the OOEP-KHDC3 scaffold, recruits BLM and TRIM25 to DNA replication forks, thereby promoting the ubiquitination of BLM by TRIM25, enhancing BLM retainment at replication forks and therefore promoting stalled replication fork restart. Regulates homologous recombination-mediated DNA repair via recruitment of RAD51 to sites of DNA double-strand breaks, and sustainment of PARP1 activity, which in turn modulates downstream ATM or ATR activation. Activation of ATM or ATR in response to DNA double-strand breaks may be cell-type specific. Its role in DNA double-strand break repair is independent of its role in restarting stalled replication forks. Promotes neural stem cell neurogenesis and neuronal differentiation in the hippocampus. May regulate normal development of learning, memory and anxiety. Capable of binding RNA. The sequence is that of KH domain-containing protein 3 from Mus musculus (Mouse).